The chain runs to 137 residues: Protein Turandot X (137 aa).

An N-terminal signal peptide occupies residues 1–24; that stretch reads MKVPVFQLSCLLCLIVCLLCSVKA.

This sequence belongs to the Turandot family.

Its subcellular location is the secreted. Its function is as follows. A humoral factor that may play a role in stress tolerance. The polypeptide is Protein Turandot X (Drosophila persimilis (Fruit fly)).